Consider the following 196-residue polypeptide: Large ribosomal subunit protein uL18 (196 aa).

Belongs to the universal ribosomal protein uL18 family. In terms of assembly, part of the 50S ribosomal subunit. Contacts the 5S and 23S rRNAs.

In terms of biological role, this is one of the proteins that bind and probably mediate the attachment of the 5S RNA into the large ribosomal subunit, where it forms part of the central protuberance. This is Large ribosomal subunit protein uL18 from Sulfurisphaera tokodaii (strain DSM 16993 / JCM 10545 / NBRC 100140 / 7) (Sulfolobus tokodaii).